The following is a 358-amino-acid chain: Protein Wnt-8b (358 aa).

The signal sequence occupies residues 1-23 (MFMHLEVYYYAFILMAHMKTCCG). Cysteines 55 and 66 form a disulfide. Asn104 is a glycosylation site (N-linked (GlcNAc...) asparagine). 10 cysteine pairs are disulfide-bonded: Cys105-Cys113, Cys115-Cys133, Cys181-Cys195, Cys183-Cys190, Cys257-Cys295, Cys273-Cys288, Cys292-Cys334, Cys310-Cys325, Cys312-Cys322, and Cys317-Cys318. A lipid anchor (O-palmitoleoyl serine) is attached at Ser187. 2 N-linked (GlcNAc...) asparagine glycosylation sites follow: Asn260 and Asn279. Asn345 is a glycosylation site (N-linked (GlcNAc...) asparagine).

It belongs to the Wnt family. Palmitoleoylation is required for efficient binding to frizzled receptors. Depalmitoleoylation leads to Wnt signaling pathway inhibition. Post-translationally, proteolytic processing by tiki1 and tiki2 promotes oxidation and formation of large disulfide-bond oligomers, leading to inactivation of wnt8b. As to expression, hindbrain r1, 2 and 5.

It localises to the secreted. The protein resides in the extracellular space. It is found in the extracellular matrix. In terms of biological role, ligand for fzd8a, a member of the G-protein coupled frizzled receptor family. May play a role in the establishment of polarity in the nervous system. Involved in canonical Wnt signaling pathway. During embryonic development, required for the acquisition of caudal diencephalic fate. Antagonizes eye specification. The polypeptide is Protein Wnt-8b (wnt8b) (Danio rerio (Zebrafish)).